The sequence spans 184 residues: Cytidylate kinase (184 aa).

8–16 (GQPGSGKTT) provides a ligand contact to ATP.

The protein belongs to the cytidylate kinase family. Type 2 subfamily.

The protein resides in the cytoplasm. The enzyme catalyses CMP + ATP = CDP + ADP. It carries out the reaction dCMP + ATP = dCDP + ADP. This Pyrobaculum calidifontis (strain DSM 21063 / JCM 11548 / VA1) protein is Cytidylate kinase.